Consider the following 311-residue polypeptide: Malate dehydrogenase (311 aa).

Residues 7–13 (GAAGGIG) and D34 contribute to the NAD(+) site. Substrate contacts are provided by R81 and R87. Residues N94 and 117-119 (ITN) contribute to the NAD(+) site. Positions 119 and 153 each coordinate substrate. H177 acts as the Proton acceptor in catalysis. Position 227 (M227) interacts with NAD(+).

It belongs to the LDH/MDH superfamily. MDH type 1 family. In terms of assembly, homodimer.

It carries out the reaction (S)-malate + NAD(+) = oxaloacetate + NADH + H(+). In terms of biological role, catalyzes the reversible oxidation of malate to oxaloacetate. The chain is Malate dehydrogenase from Aeromonas salmonicida (strain A449).